Here is a 252-residue protein sequence, read N- to C-terminus: Indole-3-glycerol phosphate synthase (252 aa).

Belongs to the TrpC family.

It catalyses the reaction 1-(2-carboxyphenylamino)-1-deoxy-D-ribulose 5-phosphate + H(+) = (1S,2R)-1-C-(indol-3-yl)glycerol 3-phosphate + CO2 + H2O. It participates in amino-acid biosynthesis; L-tryptophan biosynthesis; L-tryptophan from chorismate: step 4/5. This Listeria monocytogenes serovar 1/2a (strain ATCC BAA-679 / EGD-e) protein is Indole-3-glycerol phosphate synthase.